Here is a 797-residue protein sequence, read N- to C-terminus: Discoidin domain-containing receptor tyrosine kinase B (797 aa).

An N-terminal signal peptide occupies residues 1–19 (MKLLLYLFGVTFHSNTVVA). Over 20 to 384 (LELRECSHQL…VTEHDDGTSM (365 aa)) the chain is Extracellular. One can recognise an F5/8 type C domain in the interval 25 to 181 (CSHQLGMSNR…VCMRVEVFGC (157 aa)). Residues Cys25 and Cys181 are joined by a disulfide bond. The interval 46–66 (SFDLQSTGPQHARAHQESGSG) is disordered. N-linked (GlcNAc...) asparagine glycans are attached at residues Asn141, Asn167, Asn264, and Asn353. A helical membrane pass occupies residues 385 to 405 (FAFIIFFFMFLIVAVIILTVL). The Cytoplasmic portion of the chain corresponds to 406-797 (YRKREYRVKA…LVHTSPHIHF (392 aa)). Residues 527–785 (LICVSRIGQG…PSFENVHLHL (259 aa)) form the Protein kinase domain. Residues 533-541 (IGQGEFGEV) and Lys554 contribute to the ATP site. Asp645 functions as the Proton acceptor in the catalytic mechanism.

It belongs to the protein kinase superfamily. Tyr protein kinase family. Insulin receptor subfamily. As to quaternary structure, interacts with shc-1. Post-translationally, autophosphorylated on tyrosine residues. N-glycosylation at Asn-141 is required for axon regeneration after injury but is dispensable for kinase activity and axon localization. In terms of tissue distribution, expressed in some neurons in head and tail, some motoneurons in ventral nerve cord, in PVP interneurons, seam cells, rectal gland cells, vulva cells and some non-neuronal cells in the tail. Expressed in D-type motor neurons.

The protein localises to the cell membrane. It localises to the cell projection. Its subcellular location is the axon. The protein resides in the perikaryon. The enzyme catalyses L-tyrosyl-[protein] + ATP = O-phospho-L-tyrosyl-[protein] + ADP + H(+). Functionally, tyrosine-protein kinase receptor which, together with ddr-1, is involved in axon guidance to establish the tracts for the ventral and dorsal nerve cords during nervous system development. Acts upstream of the adapter shc-1, and the tyrosine kinase receptors svh-1 and svh-2 to regulate axon regeneration following injury in D-type motor neurons. May mediate axon regeneration in association with the collagen emb-9. The chain is Discoidin domain-containing receptor tyrosine kinase B from Caenorhabditis elegans.